Here is a 190-residue protein sequence, read N- to C-terminus: Cytoglobin (190 aa).

Residues 1-21 (MEKVPGDMEIERRERNEELSE) form a disordered region. Residues 18–167 (ELSEAERKAV…IYSHVTAAYK (150 aa)) form the Globin domain. Residues cysteine 38 and cysteine 83 are joined by a disulfide bond. Heme b-binding residues include histidine 81 and histidine 113.

The protein belongs to the globin family. Monomeric. Homodimer; disulfide-linked in vitro. Also homooligomeric in vitro. The formation of an intramolecular disulfide bond between cysteines Cys-38 and Cys-83 specifically enhances the nitrite reductase activity. Widely expressed (at protein level).

Its subcellular location is the cytoplasm. It is found in the nucleus. It carries out the reaction Fe(II)-heme b-[protein] + nitric oxide + O2 = Fe(III)-heme b-[protein] + nitrate. It catalyses the reaction Fe(III)-heme b-[protein] + nitric oxide + H2O = Fe(II)-heme b-[protein] + nitrite + 2 H(+). The catalysed reaction is 2 superoxide + 2 H(+) = H2O2 + O2. The enzyme catalyses H2O2 + AH2 = A + 2 H2O. With respect to regulation, the nitric oxide dioxygenase activity is activated by a reducing system composed of cytochrome b5, its upstream reductase CYB5R3 and NADH. Probable multifunctional globin with a hexacoordinated heme iron required for the catalysis of various reactions depending on redox condition of the cell as well as oxygen availability. Has a nitric oxide dioxygenase (NOD) activity and is most probably involved in cell-mediated and oxygen-dependent nitric oxide consumption. By scavenging this second messenger may regulate several biological processes including endothelium-mediated vasodilation and vascular tone. Under normoxic conditions functions as a nitric oxide dioxygenase (NOD) but under hypoxic conditions the globin may switch its function to that of a nitrite (NO2) reductase (NiR), generating nitric oxide. Could also have peroxidase and superoxide dismutase activities, detoxifying reactive oxygen species and protecting cells against oxidative stress. Also binds dioxygen with low affinity and could function as an oxygen sensor but has probably no function as a respiratory oxygen carrier. In Rattus norvegicus (Rat), this protein is Cytoglobin.